A 345-amino-acid chain; its full sequence is Ubiquinone biosynthesis O-methyltransferase, mitochondrial (345 aa).

The transit peptide at 1–86 directs the protein to the mitochondrion; it reads MWRGGRLSSR…TYRSSWKKLY (86 aa). Residue Arg-124 coordinates S-adenosyl-L-methionine. Residues Lys-143 and Lys-149 each carry the N6-acetyllysine modification. Positions 154 and 175 each coordinate S-adenosyl-L-methionine. Residue Lys-196 is modified to N6-acetyllysine. Ser-222 contacts S-adenosyl-L-methionine. Mg(2+) is bound by residues Glu-223, Glu-226, and His-227.

The protein belongs to the class I-like SAM-binding methyltransferase superfamily. UbiG/COQ3 family. As to quaternary structure, component of a multi-subunit COQ enzyme complex, composed of at least COQ3, COQ4, COQ5, COQ6, COQ7 and COQ9. Mg(2+) serves as cofactor.

Its subcellular location is the mitochondrion inner membrane. The enzyme catalyses 3,4-dihydroxy-5-(all-trans-decaprenyl)benzoate + S-adenosyl-L-methionine = 4-hydroxy-3-methoxy-5-(all-trans-decaprenyl)benzoate + S-adenosyl-L-homocysteine + H(+). It catalyses the reaction a 3-demethylubiquinone + S-adenosyl-L-methionine = a ubiquinone + S-adenosyl-L-homocysteine. The catalysed reaction is 3-demethylubiquinol-10 + S-adenosyl-L-methionine = ubiquinol-10 + S-adenosyl-L-homocysteine + H(+). The protein operates within cofactor biosynthesis; ubiquinone biosynthesis. Its function is as follows. O-methyltransferase required for two non-consecutive steps during ubiquinone biosynthesis. Catalyzes the 2 O-methylation of 3,4-dihydroxy-5-(all-trans-decaprenyl)benzoic acid into 4-hydroxy-3-methoxy-5-(all-trans-decaprenyl)benzoic acid. Also catalyzes the last step of ubiquinone biosynthesis by mediating methylation of 3-demethylubiquinone into ubiquinone. Also able to mediate the methylation of 3-demethylubiquinol-10 into ubiquinol-10. The polypeptide is Ubiquinone biosynthesis O-methyltransferase, mitochondrial (Rattus norvegicus (Rat)).